We begin with the raw amino-acid sequence, 265 residues long: Gamma-secretase subunit APH-1A (265 aa).

Topologically, residues 1–2 (MG) are lumenal. Residues 3–23 (AAVFFGCTFVAFGPAFSLFLI) form a helical membrane-spanning segment. The Cytoplasmic segment spans residues 24–31 (TVAGDPLR). The helical transmembrane segment at 32–52 (VIILVAGAFFWLVSLLLASVV) threads the bilayer. The Lumenal segment spans residues 53–68 (WFILVHVTDRSDARLQ). Residues 69–89 (YGLLIFGAAVSVLLQEVFRFA) form a helical membrane-spanning segment. Residues 90-118 (YYKLLKKADEGLASLSEDGRSPISIRQMA) lie on the Cytoplasmic side of the membrane. A helical transmembrane segment spans residues 119–139 (YVSGLSFGIISGVFSVINILA). Residues 140 to 158 (DALGPGVVGIHGDSPYYFL) lie on the Lumenal side of the membrane. A helical transmembrane segment spans residues 159-179 (TSAFLTAAIILLHTFWGVVFF). At 180 to 186 (DACERRR) the chain is on the cytoplasmic side. Residues 187 to 207 (YWALGLVVGSHLLTSGLTFLN) form a helical membrane-spanning segment. Over 208–213 (PWYEAS) the chain is Lumenal. A helical transmembrane segment spans residues 214–234 (LLPIYAVTVSMGLWAFITAGG). Over 235–265 (SLRSIQRSLSCRRQEDSRVMVYSALRIPPED) the chain is Cytoplasmic.

This sequence belongs to the APH-1 family. In terms of assembly, the functional gamma-secretase complex is composed of at least four polypeptides: a presenilin homodimer (PSEN1 or PSEN2), nicastrin (NCSTN), APH1 (APH1A or APH1B) and PSENEN/PEN2.

It localises to the endoplasmic reticulum membrane. The protein resides in the golgi apparatus. It is found in the golgi stack membrane. In terms of biological role, non-catalytic subunit of the gamma-secretase complex, an endoprotease complex that catalyzes the intramembrane cleavage of integral membrane proteins such as Notch receptors and APP (amyloid-beta precursor protein). Required for normal gamma-secretase assembly. The gamma-secretase complex plays a role in Notch and Wnt signaling cascades and regulation of downstream processes via its role in processing key regulatory proteins, and by regulating cytosolic CTNNB1 levels. The protein is Gamma-secretase subunit APH-1A (Aph1a) of Mus musculus (Mouse).